Consider the following 502-residue polypeptide: Probable cytosol aminopeptidase (502 aa).

2 residues coordinate Mn(2+): K270 and D275. K282 is a catalytic residue. Mn(2+)-binding residues include D293, D352, and E354. The active site involves R356.

Belongs to the peptidase M17 family. Mn(2+) is required as a cofactor.

The protein resides in the cytoplasm. It catalyses the reaction Release of an N-terminal amino acid, Xaa-|-Yaa-, in which Xaa is preferably Leu, but may be other amino acids including Pro although not Arg or Lys, and Yaa may be Pro. Amino acid amides and methyl esters are also readily hydrolyzed, but rates on arylamides are exceedingly low.. The catalysed reaction is Release of an N-terminal amino acid, preferentially leucine, but not glutamic or aspartic acids.. Its function is as follows. Presumably involved in the processing and regular turnover of intracellular proteins. Catalyzes the removal of unsubstituted N-terminal amino acids from various peptides. The sequence is that of Probable cytosol aminopeptidase from Desulfotalea psychrophila (strain LSv54 / DSM 12343).